Here is a 304-residue protein sequence, read N- to C-terminus: Ornithine carbamoyltransferase (304 aa).

Carbamoyl phosphate contacts are provided by residues 53–56, Gln80, Arg104, and 131–134; these read STRT and HPCQ. L-ornithine contacts are provided by residues Asn162, Asp219, and 223-224; that span reads SM. Carbamoyl phosphate contacts are provided by residues 259–260 and Arg287; that span reads CL.

Belongs to the aspartate/ornithine carbamoyltransferase superfamily. OTCase family.

It is found in the cytoplasm. It catalyses the reaction carbamoyl phosphate + L-ornithine = L-citrulline + phosphate + H(+). It participates in amino-acid biosynthesis; L-arginine biosynthesis; L-arginine from L-ornithine and carbamoyl phosphate: step 1/3. In terms of biological role, reversibly catalyzes the transfer of the carbamoyl group from carbamoyl phosphate (CP) to the N(epsilon) atom of ornithine (ORN) to produce L-citrulline. The chain is Ornithine carbamoyltransferase from Herminiimonas arsenicoxydans.